Reading from the N-terminus, the 97-residue chain is Aspartyl/glutamyl-tRNA(Asn/Gln) amidotransferase subunit C (97 aa).

It belongs to the GatC family. Heterotrimer of A, B and C subunits.

The catalysed reaction is L-glutamyl-tRNA(Gln) + L-glutamine + ATP + H2O = L-glutaminyl-tRNA(Gln) + L-glutamate + ADP + phosphate + H(+). The enzyme catalyses L-aspartyl-tRNA(Asn) + L-glutamine + ATP + H2O = L-asparaginyl-tRNA(Asn) + L-glutamate + ADP + phosphate + 2 H(+). Its function is as follows. Allows the formation of correctly charged Asn-tRNA(Asn) or Gln-tRNA(Gln) through the transamidation of misacylated Asp-tRNA(Asn) or Glu-tRNA(Gln) in organisms which lack either or both of asparaginyl-tRNA or glutaminyl-tRNA synthetases. The reaction takes place in the presence of glutamine and ATP through an activated phospho-Asp-tRNA(Asn) or phospho-Glu-tRNA(Gln). The sequence is that of Aspartyl/glutamyl-tRNA(Asn/Gln) amidotransferase subunit C from Clostridium botulinum (strain Eklund 17B / Type B).